Reading from the N-terminus, the 358-residue chain is Probable dual-specificity RNA methyltransferase RlmN 1 (358 aa).

Positions 101–326 (MQAGGTLCIS…REKGFYTLLR (226 aa)) constitute a Radical SAM core domain. Residues C108 and C337 are joined by a disulfide bond. Residues C115, C119, and C122 each contribute to the [4Fe-4S] cluster site. Residues 162–163 (GE), S194, 218–220 (SLN), and N294 each bind S-adenosyl-L-methionine. Residue C337 is the S-methylcysteine intermediate of the active site.

The protein belongs to the radical SAM superfamily. RlmN family. [4Fe-4S] cluster is required as a cofactor.

It localises to the cytoplasm. The enzyme catalyses adenosine(2503) in 23S rRNA + 2 reduced [2Fe-2S]-[ferredoxin] + 2 S-adenosyl-L-methionine = 2-methyladenosine(2503) in 23S rRNA + 5'-deoxyadenosine + L-methionine + 2 oxidized [2Fe-2S]-[ferredoxin] + S-adenosyl-L-homocysteine. It carries out the reaction adenosine(37) in tRNA + 2 reduced [2Fe-2S]-[ferredoxin] + 2 S-adenosyl-L-methionine = 2-methyladenosine(37) in tRNA + 5'-deoxyadenosine + L-methionine + 2 oxidized [2Fe-2S]-[ferredoxin] + S-adenosyl-L-homocysteine. Functionally, specifically methylates position 2 of adenine 2503 in 23S rRNA and position 2 of adenine 37 in tRNAs. This chain is Probable dual-specificity RNA methyltransferase RlmN 1, found in Protochlamydia amoebophila (strain UWE25).